Reading from the N-terminus, the 363-residue chain is Fructose-bisphosphate aldolase C (363 aa).

The substrate site is built by arginine 56 and lysine 147. The Schiff-base intermediate with dihydroxyacetone-P role is filled by lysine 230.

It belongs to the class I fructose-bisphosphate aldolase family. In terms of assembly, homotetramer. In terms of tissue distribution, expressed in brain but not in liver or muscle.

The catalysed reaction is beta-D-fructose 1,6-bisphosphate = D-glyceraldehyde 3-phosphate + dihydroxyacetone phosphate. The protein operates within carbohydrate degradation; glycolysis; D-glyceraldehyde 3-phosphate and glycerone phosphate from D-glucose: step 4/4. The polypeptide is Fructose-bisphosphate aldolase C (aldoc) (Carassius auratus (Goldfish)).